We begin with the raw amino-acid sequence, 179 residues long: Ribulose bisphosphate carboxylase small subunit, chloroplastic 5 (179 aa).

The N-terminal 58 residues, 1 to 58 (MASSATMLSSVATAACAAPAQASMVAPFVGLKSASAFPVTQKTATGLSTLPSNGGRVQ), are a transit peptide targeting the chloroplast.

It belongs to the RuBisCO small chain family. As to quaternary structure, heterohexadecamer of 8 large and 8 small subunits.

The protein localises to the plastid. It localises to the chloroplast. RuBisCO catalyzes two reactions: the carboxylation of D-ribulose 1,5-bisphosphate, the primary event in carbon dioxide fixation, as well as the oxidative fragmentation of the pentose substrate. Both reactions occur simultaneously and in competition at the same active site. Although the small subunit is not catalytic it is essential for maximal activity. The chain is Ribulose bisphosphate carboxylase small subunit, chloroplastic 5 from Fritillaria agrestis (Stinkbells).